Consider the following 865-residue polypeptide: Aconitate hydratase B (865 aa).

Substrate-binding positions include arginine 191, serine 244–arginine 246, glutamine 414–threonine 416, and serine 498. [4Fe-4S] cluster is bound by residues cysteine 710, cysteine 769, and cysteine 772. Substrate contacts are provided by arginine 791 and arginine 796.

The protein belongs to the aconitase/IPM isomerase family. In terms of assembly, monomer. [4Fe-4S] cluster serves as cofactor.

It carries out the reaction citrate = D-threo-isocitrate. It catalyses the reaction (2S,3R)-3-hydroxybutane-1,2,3-tricarboxylate = 2-methyl-cis-aconitate + H2O. It functions in the pathway carbohydrate metabolism; tricarboxylic acid cycle; isocitrate from oxaloacetate: step 2/2. It participates in organic acid metabolism; propanoate degradation. In terms of biological role, involved in the catabolism of short chain fatty acids (SCFA) via the tricarboxylic acid (TCA)(acetyl degradation route) and the 2-methylcitrate cycle I (propionate degradation route). Catalyzes the reversible isomerization of citrate to isocitrate via cis-aconitate. Also catalyzes the hydration of 2-methyl-cis-aconitate to yield (2R,3S)-2-methylisocitrate. The apo form of AcnB functions as a RNA-binding regulatory protein which regulates FliC synthesis via interaction with the ftsH transcript to decrease the intracellular levels of FtsH. The lower levels of FtsH protease activity then influence sigma-32, DnaK and ultimately FliC production. The chain is Aconitate hydratase B (acnB) from Salmonella typhimurium (strain LT2 / SGSC1412 / ATCC 700720).